Consider the following 115-residue polypeptide: Ribonuclease P protein component (115 aa).

This sequence belongs to the RnpA family. Consists of a catalytic RNA component (M1 or rnpB) and a protein subunit.

The catalysed reaction is Endonucleolytic cleavage of RNA, removing 5'-extranucleotides from tRNA precursor.. In terms of biological role, RNaseP catalyzes the removal of the 5'-leader sequence from pre-tRNA to produce the mature 5'-terminus. It can also cleave other RNA substrates such as 4.5S RNA. The protein component plays an auxiliary but essential role in vivo by binding to the 5'-leader sequence and broadening the substrate specificity of the ribozyme. The polypeptide is Ribonuclease P protein component (Phytoplasma australiense).